Consider the following 189-residue polypeptide: Probable transcriptional regulator Rv1176c (189 aa).

It belongs to the PadR family. In terms of assembly, homodimer.

It is found in the cytoplasm. In terms of biological role, probable transcriptional regulator that may help mitigate the effect of oxidative stress and help mycobacteria survive inside macrophages. Binds to its own promoter region. This chain is Probable transcriptional regulator Rv1176c, found in Mycobacterium tuberculosis (strain ATCC 25618 / H37Rv).